The following is a 165-amino-acid chain: Putative protein FAM86C2P (165 aa).

Belongs to the class I-like SAM-binding methyltransferase superfamily. EEF2KMT family.

The protein is Putative protein FAM86C2P (FAM86C2P) of Homo sapiens (Human).